A 281-amino-acid polypeptide reads, in one-letter code: Diphthine methyl ester synthase (281 aa).

S-adenosyl-L-methionine is bound by residues Leu-9, Asp-84, Gly-87, 112 to 113 (SI), and Leu-163. Residue Ser-171 is modified to Phosphoserine. S-adenosyl-L-methionine is bound by residues Val-225 and His-250.

It belongs to the diphthine synthase family.

It carries out the reaction 2-[(3S)-amino-3-carboxypropyl]-L-histidyl-[translation elongation factor 2] + 4 S-adenosyl-L-methionine = diphthine methyl ester-[translation elongation factor 2] + 4 S-adenosyl-L-homocysteine + 3 H(+). The protein operates within protein modification; peptidyl-diphthamide biosynthesis. Functionally, S-adenosyl-L-methionine-dependent methyltransferase that catalyzes four methylations of the modified target histidine residue in translation elongation factor 2 (EF-2), to form an intermediate called diphthine methyl ester. The four successive methylation reactions represent the second step of diphthamide biosynthesis. The protein is Diphthine methyl ester synthase (Dph5) of Mus musculus (Mouse).